We begin with the raw amino-acid sequence, 943 residues long: 2-oxoglutarate dehydrogenase E1 component (943 aa).

It belongs to the alpha-ketoglutarate dehydrogenase family. In terms of assembly, homodimer. Part of the 2-oxoglutarate dehydrogenase (OGDH) complex composed of E1 (2-oxoglutarate dehydrogenase), E2 (dihydrolipoamide succinyltransferase) and E3 (dihydrolipoamide dehydrogenase); the complex contains multiple copies of the three enzymatic components (E1, E2 and E3). It depends on thiamine diphosphate as a cofactor.

It carries out the reaction N(6)-[(R)-lipoyl]-L-lysyl-[protein] + 2-oxoglutarate + H(+) = N(6)-[(R)-S(8)-succinyldihydrolipoyl]-L-lysyl-[protein] + CO2. Its function is as follows. E1 component of the 2-oxoglutarate dehydrogenase (OGDH) complex which catalyzes the decarboxylation of 2-oxoglutarate, the first step in the conversion of 2-oxoglutarate to succinyl-CoA and CO(2). The protein is 2-oxoglutarate dehydrogenase E1 component of Shouchella clausii (strain KSM-K16) (Alkalihalobacillus clausii).